The primary structure comprises 517 residues: MQLKLRWITILIVFVVSLFFMFPLDKRINLGLDLKGGMHVILGVETEKAVQAKIDTLTGQIRKELRNSKINFAFVQKNESGKISIGLSDPAERNKVKDLISKNYPILKESGLNSDEKVIELSLDTDEVKRIKDYAVEQAVQVIRNRVDQFGVNEPVIQRQGKEHILVQLAGITDPERAVKLIGKTAQLKFYLLDENANNEETIKSGNIPPDDIILYGKKIDKVTGQIVSTIPYVLKKDAVLTGDYLLEAEVRISSQFNEPYVSIKFDPAGSKIFEEITAENVNKRMAIVLDDNVYSAPVIRERIAGGEAQISGSFTLEEAKDLAIVLRAGSLPAPVKILENRTIGPSLGQDSIKKGIWAGIIGVAAVIIFMLIYYKFSGFIASIALLSNAIIILGAMGMFKATLTLPGIAGLILTMGMAIDANVLIFERIREELRLGRTPMNALEAGFEKAMSTIIDSNITTLIAGLVLFQFGTGPVKGFAVTLTIGILSSIFTAVTLSKTIFLTLYGNKEIKKLSV.

The next 6 helical transmembrane spans lie at 5–25 (LRWI…FPLD), 357–377 (IWAG…YYKF), 380–400 (FIAS…MGMF), 407–427 (PGIA…VLIF), 455–475 (IIDS…FGTG), and 479–499 (GFAV…VTLS).

This sequence belongs to the SecD/SecF family. SecD subfamily. As to quaternary structure, forms a complex with SecF. Part of the essential Sec protein translocation apparatus which comprises SecA, SecYEG and auxiliary proteins SecDF. Other proteins may also be involved.

It is found in the cell inner membrane. In terms of biological role, part of the Sec protein translocase complex. Interacts with the SecYEG preprotein conducting channel. SecDF uses the proton motive force (PMF) to complete protein translocation after the ATP-dependent function of SecA. This Calditerrivibrio nitroreducens (strain DSM 19672 / NBRC 101217 / Yu37-1) protein is Protein translocase subunit SecD.